A 515-amino-acid chain; its full sequence is Maturase K (515 aa).

This sequence belongs to the intron maturase 2 family. MatK subfamily.

Its subcellular location is the plastid. The protein localises to the chloroplast. Functionally, usually encoded in the trnK tRNA gene intron. Probably assists in splicing its own and other chloroplast group II introns. This Zingiber officinale (Ginger) protein is Maturase K.